Here is a 59-residue protein sequence, read N- to C-terminus: Large ribosomal subunit protein uL30 (59 aa).

The protein belongs to the universal ribosomal protein uL30 family. Part of the 50S ribosomal subunit.

In Geobacter sulfurreducens (strain ATCC 51573 / DSM 12127 / PCA), this protein is Large ribosomal subunit protein uL30.